Here is a 719-residue protein sequence, read N- to C-terminus: T-cell immunomodulatory protein homolog (719 aa).

Residues 1 to 32 (MYNFLSCKKKSIILQVLLIICTYNILLNFVNI) form the signal peptide. Over 33–677 (FVNNNEKNHK…LSVNPSKKFY (645 aa)) the chain is Extracellular. Residues Asn-144, Asn-277, Asn-410, Asn-540, and Asn-659 are each glycosylated (N-linked (GlcNAc...) asparagine). A helical transmembrane segment spans residues 678–697 (SILYITLICLSVIGVLIFIL). Topologically, residues 698–719 (DRKEKVEDSKEELGFKSHFVIG) are cytoplasmic.

This sequence belongs to the TIP family.

It is found in the membrane. Functionally, may protect the parasite against attack by the host immune system by immunomodulation. The protein is T-cell immunomodulatory protein homolog of Plasmodium falciparum (isolate 3D7).